A 220-amino-acid chain; its full sequence is Large ribosomal subunit protein uL6c (220 aa).

Residues 1 to 38 constitute a chloroplast transit peptide; it reads MSLPLPSHMKSVFLGMKVEISTSVPVTRIGFWRKSVDC.

Component of the chloroplast large ribosomal subunit (LSU). Mature 70S chloroplast ribosomes of higher plants consist of a small (30S) and a large (50S) subunit. The 30S small subunit contains 1 molecule of ribosomal RNA (16S rRNA) and 24 different proteins. The 50S large subunit contains 3 rRNA molecules (23S, 5S and 4.5S rRNA) and 33 different proteins.

The protein resides in the plastid. It is found in the chloroplast. In terms of biological role, component of the chloroplast ribosome (chloro-ribosome), a dedicated translation machinery responsible for the synthesis of chloroplast genome-encoded proteins, including proteins of the transcription and translation machinery and components of the photosynthetic apparatus. The chain is Large ribosomal subunit protein uL6c (RPL6) from Spinacia oleracea (Spinach).